We begin with the raw amino-acid sequence, 361 residues long: Queuine tRNA-ribosyltransferase (361 aa).

The active-site Proton acceptor is D92. Substrate is bound by residues 92–96, D146, Q189, and G216; that span reads DSGGF. The RNA binding stretch occupies residues 247 to 253; that stretch reads GVGKPAD. The Nucleophile role is filled by D266. The segment at 271–275 is RNA binding; important for wobble base 34 recognition; sequence TRSGR. Zn(2+) is bound by residues C304, C306, C309, and H335.

Belongs to the queuine tRNA-ribosyltransferase family. Homodimer. Within each dimer, one monomer is responsible for RNA recognition and catalysis, while the other monomer binds to the replacement base PreQ1. Requires Zn(2+) as cofactor.

The enzyme catalyses 7-aminomethyl-7-carbaguanine + guanosine(34) in tRNA = 7-aminomethyl-7-carbaguanosine(34) in tRNA + guanine. It functions in the pathway tRNA modification; tRNA-queuosine biosynthesis. In terms of biological role, catalyzes the base-exchange of a guanine (G) residue with the queuine precursor 7-aminomethyl-7-deazaguanine (PreQ1) at position 34 (anticodon wobble position) in tRNAs with GU(N) anticodons (tRNA-Asp, -Asn, -His and -Tyr). Catalysis occurs through a double-displacement mechanism. The nucleophile active site attacks the C1' of nucleotide 34 to detach the guanine base from the RNA, forming a covalent enzyme-RNA intermediate. The proton acceptor active site deprotonates the incoming PreQ1, allowing a nucleophilic attack on the C1' of the ribose to form the product. After dissociation, two additional enzymatic reactions on the tRNA convert PreQ1 to queuine (Q), resulting in the hypermodified nucleoside queuosine (7-(((4,5-cis-dihydroxy-2-cyclopenten-1-yl)amino)methyl)-7-deazaguanosine). The polypeptide is Queuine tRNA-ribosyltransferase (Rickettsia rickettsii (strain Iowa)).